The following is a 176-amino-acid chain: Large ribosomal subunit protein uL16 (176 aa).

This sequence belongs to the universal ribosomal protein uL16 family.

The sequence is that of Large ribosomal subunit protein uL16 from Sulfolobus acidocaldarius (strain ATCC 33909 / DSM 639 / JCM 8929 / NBRC 15157 / NCIMB 11770).